The chain runs to 411 residues: Phospholipase ABHD3 (411 aa).

Residues Val-25–Ala-45 form a helical; Signal-anchor for type II membrane protein membrane-spanning segment. In terms of domain architecture, AB hydrolase-1 spans Pro-140–Ile-233. Active-site charge relay system residues include Ser-220, Asp-346, and His-375.

This sequence belongs to the AB hydrolase superfamily. AB hydrolase 4 family. Widely expressed with higher expression in liver.

It is found in the membrane. The catalysed reaction is a 1,2-diacyl-sn-glycero-3-phosphocholine + H2O = a 1-acyl-sn-glycero-3-phosphocholine + a fatty acid + H(+). It catalyses the reaction a 1,2-diacyl-sn-glycero-3-phosphocholine + H2O = a 2-acyl-sn-glycero-3-phosphocholine + a fatty acid + H(+). The enzyme catalyses 1-tetradecanoyl-2-(9Z,12Z-octadecadienoyl)-sn-glycero-3-phosphocholine + H2O = 2-(9Z,12Z-octadecadienoyl)-sn-glycero-3-phosphocholine + tetradecanoate + H(+). It carries out the reaction 1-tetradecanoyl-2-(9Z,12Z-octadecadienoyl)-sn-glycero-3-phosphocholine + H2O = 1-tetradecanoyl-sn-glycero-3-phosphocholine + (9Z,12Z)-octadecadienoate + H(+). The catalysed reaction is 1-tetradecanoyl-2-(5Z,8Z,11Z,14Z-eicosatetraenoyl)-sn-glycero-3-phosphocholine + H2O = 2-(5Z,8Z,11Z,14Z)-eicosatetraenoyl-sn-glycero-3-phosphocholine + tetradecanoate + H(+). It catalyses the reaction 1-tetradecanoyl-2-(4Z,7Z,10Z,13Z,16Z,19Z-docosahexaenoyl)-sn-glycero-3-phosphocholine + H2O = 2-(4Z,7Z,10Z,13Z,16Z,19Z-docosahexaenoyl)-sn-glycero-3-phosphocholine + tetradecanoate + H(+). The enzyme catalyses 1,2-ditetradecanoyl-sn-glycero-3-phosphocholine + H2O = 2-tetradecanoyl-sn-glycero-3-phosphocholine + tetradecanoate + H(+). It carries out the reaction 1-octadecanoyl-2-acetyl-sn-glycero-3-phosphocholine + H2O = 1-octadecanoyl-sn-glycero-3-phosphocholine + acetate + H(+). The catalysed reaction is 1,2-ditetradecanoyl-sn-glycero-3-phosphocholine + H2O = 1-tetradecanoyl-sn-glycero-3-phosphocholine + tetradecanoate + H(+). It catalyses the reaction 1-octadecanoyl-2-pentanoyl-sn-glycero-3-phosphocholine + H2O = pentanoate + 1-octadecanoyl-sn-glycero-3-phosphocholine + H(+). The enzyme catalyses 1-octadecanoyl-2-hexanoyl-sn-glycero-3-phosphocholine + H2O = hexanoate + 1-octadecanoyl-sn-glycero-3-phosphocholine + H(+). It carries out the reaction 1-octadecanoyl-2-octanoyl-sn-glycero-3-phosphocholine + H2O = 1-octadecanoyl-sn-glycero-3-phosphocholine + octanoate + H(+). The catalysed reaction is 1-octadecanoyl-2-nonanoyl-sn-glycero-3-phosphocholine + H2O = nonanoate + 1-octadecanoyl-sn-glycero-3-phosphocholine + H(+). It catalyses the reaction 1-O-hexadecyl-2-nonadioyl-sn-glycero-3-phosphocholine + H2O = nonanedioate + 1-O-hexadecyl-sn-glycero-3-phosphocholine + H(+). The enzyme catalyses 1-hexadecanoyl-2-nonadioyl-sn-glycero-3-phosphocholine + H2O = nonanedioate + 1-hexadecanoyl-sn-glycero-3-phosphocholine + H(+). It carries out the reaction 1-hexadecanoyl-2-(9-oxononanoyl)-sn-glycero-3-phosphocholine + H2O = 9-oxononanoate + 1-hexadecanoyl-sn-glycero-3-phosphocholine + H(+). The catalysed reaction is 1-hexadecanoyl-2-(5-oxopentanoyl)-sn-glycero-3-phosphocholine + H2O = 5-oxopentanoate + 1-hexadecanoyl-sn-glycero-3-phosphocholine + H(+). It catalyses the reaction 1-hexadecanoyl-2-glutaroyl-sn-glycero-3-phosphocholine + H2O = glutarate + 1-hexadecanoyl-sn-glycero-3-phosphocholine + H(+). The enzyme catalyses 1-O-hexadecyl-2-acetyl-sn-glycero-3-phosphocholine + H2O = 1-O-hexadecyl-sn-glycero-3-phosphocholine + acetate + H(+). Phospholipase that may play a role in phospholipids remodeling. May selectively cleave myristate (C14)-containing phosphatidylcholines through its predominant phospholipase 1 activity, cleaving preferentially acyl groups in sn1 position. In parallel, may have a minor phospholipase 2 activity acting on acyl groups in position sn2. In addition to (C14)-containing phosphatidylcholines, may also act on other medium-chain-containing and oxidatively truncated phospholipids. This chain is Phospholipase ABHD3, found in Mus musculus (Mouse).